The following is a 664-amino-acid chain: Macrolide export ATP-binding/permease protein MacB (664 aa).

The ABC transporter domain maps to 8 to 245; sequence LELVDVHRTY…AGPSVPLTLD (238 aa). 44-51 is an ATP binding site; that stretch reads GSSGSGKS. 4 consecutive transmembrane segments (helical) span residues 283–303, 543–563, 602–622, and 627–647; these read LLSVLGILVGVASVIAMMALG, GAIAAISLLVGGIGIMNIMLV, IIGIIAGIGISALLAVFAGWA, and IVSIVLATFFSAITGIFFGLW.

Belongs to the ABC transporter superfamily. Macrolide exporter (TC 3.A.1.122) family. In terms of assembly, homodimer.

The protein resides in the cell inner membrane. Functionally, non-canonical ABC transporter that contains transmembrane domains (TMD), which form a pore in the inner membrane, and an ATP-binding domain (NBD), which is responsible for energy generation. Confers resistance against macrolides. The sequence is that of Macrolide export ATP-binding/permease protein MacB from Chlorobium luteolum (strain DSM 273 / BCRC 81028 / 2530) (Pelodictyon luteolum).